The primary structure comprises 679 residues: UvrABC system protein C (679 aa).

Residues 65-143 (NSPGVYRMLN…IKRLRPRFNV (79 aa)) form the GIY-YIG domain. One can recognise a UVR domain in the interval 253–288 (QKVKSHMAEAMNQAAEDLDFERAAIYRDRLAALSHV).

It belongs to the UvrC family. As to quaternary structure, interacts with UvrB in an incision complex.

It localises to the cytoplasm. The UvrABC repair system catalyzes the recognition and processing of DNA lesions. UvrC both incises the 5' and 3' sides of the lesion. The N-terminal half is responsible for the 3' incision and the C-terminal half is responsible for the 5' incision. The chain is UvrABC system protein C from Rhizobium etli (strain ATCC 51251 / DSM 11541 / JCM 21823 / NBRC 15573 / CFN 42).